The chain runs to 583 residues: Cysteine/serine-rich nuclear protein 1 (583 aa).

Disordered stretches follow at residues Met-1–Glu-79 and Ala-306–Val-381. Positions Ser-18 to Pro-41 are enriched in low complexity. Positions Ala-54 to Pro-69 are enriched in polar residues. The segment covering Pro-335–Ser-361 has biased composition (low complexity). Positions Pro-364–Pro-373 are enriched in pro residues.

Belongs to the AXUD1 family. In terms of tissue distribution, widely expressed with highest levels in thymus and lung. Low levels detected in naive T-cells.

Its subcellular location is the nucleus. In terms of biological role, binds to the consensus sequence 5'-AGAGTG-3' and has transcriptional activator activity. May have a tumor-suppressor function. May play a role in apoptosis. This Mus musculus (Mouse) protein is Cysteine/serine-rich nuclear protein 1 (Csrnp1).